Here is a 577-residue protein sequence, read N- to C-terminus: Guanine nucleotide-binding protein-like 3-like protein (577 aa).

The span at 1–30 shows a compositional bias: basic residues; the sequence is MMKIRHKNKKPGKGSKGCKKPARQNGKKVT. Positions 1–75 are disordered; that stretch reads MMKIRHKNKK…VAREQERQRH (75 aa). Positions 9–28 are required for nucleolar localization; sequence KKPGKGSKGCKKPARQNGKK. Residues 42–75 show a composition bias toward basic and acidic residues; that stretch reads GNDHASREAELKKKRVEEMREKQQVAREQERQRH. Residues 43–103 adopt a coiled-coil conformation; the sequence is NDHASREAEL…QKEEVLQELN (61 aa). The 187-residue stretch at 118–304 folds into the CP-type G domain; that stretch reads YKEFRKVVEY…LLDAPGIVPG (187 aa). Residues 166–169, 253–260, and 297–300 contribute to the GTP site; these read NKID, GLPNVGKS, and DAPG.

The protein belongs to the TRAFAC class YlqF/YawG GTPase family. Interacts with MDM2; this interaction, which occurs in the nucleoplasm, stabilizes MDM2. Indirectly interacts with TP53, via MDM2-binding. Interacts with TERF1; this interaction probably occurs in the nucleoplasm and is increased during mitosis, when the nucleolus is disassembled. This binding may promote TERF1 homodimerization. Interacts with TERT.

Its subcellular location is the nucleus. It is found in the nucleolus. Functionally, stabilizes TERF1 telomeric association by preventing TERF1 recruitment by PML. Stabilizes TERF1 protein by preventing its ubiquitination and hence proteasomal degradation. Does so by interfering with TERF1-binding to FBXO4 E3 ubiquitin-protein ligase. Required for cell proliferation. By stabilizing TRF1 protein during mitosis, promotes metaphase-to-anaphase transition. Stabilizes MDM2 protein by preventing its ubiquitination, and hence proteasomal degradation. By acting on MDM2, may affect TP53 activity. Required for normal processing of ribosomal pre-rRNA. Binds GTP. The polypeptide is Guanine nucleotide-binding protein-like 3-like protein (Gnl3l) (Mus musculus (Mouse)).